The following is a 120-amino-acid chain: NAD(P)H-quinone oxidoreductase subunit 3, chloroplastic (120 aa).

3 consecutive transmembrane segments (helical) span residues 9–29 (IFWAFLIISSAIPFLAFLISG), 64–84 (MFALVFVVFDVETVFLYPWAM), and 88–108 (VLGVSAFIEAFVFVLILILGL).

Belongs to the complex I subunit 3 family. In terms of assembly, NDH is composed of at least 16 different subunits, 5 of which are encoded in the nucleus.

The protein resides in the plastid. It is found in the chloroplast thylakoid membrane. The catalysed reaction is a plastoquinone + NADH + (n+1) H(+)(in) = a plastoquinol + NAD(+) + n H(+)(out). It carries out the reaction a plastoquinone + NADPH + (n+1) H(+)(in) = a plastoquinol + NADP(+) + n H(+)(out). In terms of biological role, NDH shuttles electrons from NAD(P)H:plastoquinone, via FMN and iron-sulfur (Fe-S) centers, to quinones in the photosynthetic chain and possibly in a chloroplast respiratory chain. The immediate electron acceptor for the enzyme in this species is believed to be plastoquinone. Couples the redox reaction to proton translocation, and thus conserves the redox energy in a proton gradient. The polypeptide is NAD(P)H-quinone oxidoreductase subunit 3, chloroplastic (Aethionema grandiflorum (Persian stone-cress)).